The primary structure comprises 760 residues: Serine/threonine-protein kinase PknG (760 aa).

The tract at residues 1 to 31 (MTSPENPDLPDADDAYVDSGPGTQPASLEDL) is disordered. The Protein kinase domain occupies 161–403 (YEIKGCIAHG…SAEEMSSQLL (243 aa)). ATP is bound by residues 167–175 (IAHGGLGWV) and Lys-191. Residue Asp-286 is the Proton acceptor of the active site.

The protein belongs to the protein kinase superfamily. Ser/Thr protein kinase family. Interacts with GarA in vitro.

It catalyses the reaction L-seryl-[protein] + ATP = O-phospho-L-seryl-[protein] + ADP + H(+). The catalysed reaction is L-threonyl-[protein] + ATP = O-phospho-L-threonyl-[protein] + ADP + H(+). The protein is Serine/threonine-protein kinase PknG (pknG) of Mycolicibacterium smegmatis (strain ATCC 700084 / mc(2)155) (Mycobacterium smegmatis).